Here is a 368-residue protein sequence, read N- to C-terminus: MATNNIVVLGAGVSGLTTAWLLSKDPSNKITVAAKHMPGDYDIEYCSPWAGANYLPVGAENSRVGQWERATWPHLRDIAQNHPEAGIHFQDTVVYNRTKDQGSTTGQWFSELVKPNPWYGKVLPNFRELSKDELPPGIDNANRFTSVCINTAVYLPWLVGQCRKNGVVFKRAVFKHVAEAANAHHSGQKADLVVNCTGLSSRKLGGVQDNTLLPARGQIVVVRNDPGLMCSISGTDDGDDEVTYMMTRAAGGGTILGGTYQKHNWDSLPDPNLAVRIMKRCIELCPSLVAPGQGIEGLDIIRHGVGLRPVREDGPRIEKELIDGVWVVHNYGHGGYGYQTSFGCATTAVEVVREALQQQKQRRDKARL.

Residues Ala-11, Ser-14, Lys-35, His-36, Cys-46, Ser-47, Gly-51, Asn-53, and Phe-174 each contribute to the FAD site. Cysteines 230 and 285 form a disulfide. Positions 244, 260, and 308 each coordinate (R)-lactate. Tyr-244, Tyr-260, and Arg-308 together coordinate anthranilate. Arg-308, Gly-334, Gly-337, Tyr-338, and Gln-339 together coordinate FAD. A Microbody targeting signal motif is present at residues 366-368 (ARL).

The protein belongs to the DAMOX/DASOX family. Homotetramer. FAD is required as a cofactor. Post-translationally, the disulfide bond might contribute to the high thermal stability of the protein.

It is found in the peroxisome matrix. The enzyme catalyses a D-alpha-amino acid + O2 + H2O = a 2-oxocarboxylate + H2O2 + NH4(+). It catalyses the reaction D-alanine + O2 + H2O = pyruvate + H2O2 + NH4(+). It carries out the reaction D-glutamate + O2 + H2O = H2O2 + 2-oxoglutarate + NH4(+). The catalysed reaction is D-serine + O2 + H2O = 3-hydroxypyruvate + H2O2 + NH4(+). The enzyme catalyses D-phenylalanine + O2 + H2O = 3-phenylpyruvate + H2O2 + NH4(+). It catalyses the reaction D-arginine + O2 + H2O = 5-guanidino-2-oxopentanoate + H2O2 + NH4(+). It carries out the reaction D-methionine + O2 + H2O = 4-methylsulfanyl-2-oxobutanoate + H2O2 + NH4(+). The catalysed reaction is D-leucine + O2 + H2O = 4-methyl-2-oxopentanoate + H2O2 + NH4(+). The enzyme catalyses D-lysine + O2 + H2O = 6-amino-2-oxohexanoate + H2O2 + NH4(+). It catalyses the reaction D-valine + O2 + H2O = 3-methyl-2-oxobutanoate + H2O2 + NH4(+). It carries out the reaction D-histidine + O2 + H2O = 3-(imidazol-5-yl)pyruvate + H2O2 + NH4(+). The catalysed reaction is D-glutamine + O2 + H2O = 2-oxoglutaramate + H2O2 + NH4(+). The enzyme catalyses D-isoleucine + O2 + H2O = (R)-3-methyl-2-oxopentanoate + H2O2 + NH4(+). It catalyses the reaction D-allo-isoleucine + O2 + H2O = (S)-3-methyl-2-oxopentanoate + H2O2 + NH4(+). It carries out the reaction D-threonine + O2 + H2O = (S)-3-hydroxy-2-oxobutanoate + H2O2 + NH4(+). The catalysed reaction is D-asparagine + O2 + H2O = 2-oxosuccinamate + H2O2 + NH4(+). The enzyme catalyses D-tryptophan + O2 + H2O = indole-3-pyruvate + H2O2 + NH4(+). It catalyses the reaction D-tyrosine + O2 + H2O = 3-(4-hydroxyphenyl)pyruvate + H2O2 + NH4(+). Its activity is regulated as follows. Partially inhibited by benzoate, crotonate, and D-malate. Functionally, catalyzes the oxidative deamination of D-amino acids with broad substrate specificity. Enables the organism to utilize D-amino acids as a source of nutrients. Unusually, has high activity on D-glutamate. The chain is D-amino-acid oxidase from Talaromyces emersonii (Thermophilic fungus).